Reading from the N-terminus, the 606-residue chain is Protein couch potato (606 aa).

A Nuclear localization signal motif is present at residues 81 to 105 (IKRRPTLPQTPASAPQVLSPSPKRQ). Tandem repeats lie at residues 91 to 95 (PASAP), 109 to 113 (AVSVL), 114 to 118 (PVTVP), 122 to 126 (PVSVP), 128 to 132 (PVSVP), 134 to 138 (PVSVK), and 159 to 163 (PISHP). The interval 91–164 (PASAPQVLSP…SHSHPISHPH (74 aa)) is 7 X 5 AA approximate repeats of P-V-S-V-P. Disordered stretches follow at residues 147–166 (QIAH…PHHH), 282–311 (QQQQ…AGAA), 324–365 (VPTT…TSAA), and 388–410 (PATS…NSNS). The span at 344–365 (SNSATASAPTTPSPAGSVTSAA) shows a compositional bias: low complexity. The 83-residue stretch at 442–524 (RTLFVSGLPM…QTIRLEFAKS (83 aa)) folds into the RRM domain.

As to expression, expressed in neural precursors and their daughter cells in the embryonic peripheral nervous system. Less abundant in a number of glial cells in the peripheral and central nervous systems and also present at low levels in the developing gut.

Its subcellular location is the nucleus. May play a role in the development or function of the peripheral nervous system by regulating the processing of nervous system-specific transcripts. This Drosophila melanogaster (Fruit fly) protein is Protein couch potato (cpo).